Consider the following 275-residue polypeptide: Myb/SANT-like DNA-binding domain-containing protein 3 (275 aa).

Positions 13-78 (FSELEKSILL…QLKKCWENIK (66 aa)) constitute a Myb-like domain. A phosphoserine mark is found at serine 96 and serine 98. Lysine 154 is covalently cross-linked (Glycyl lysine isopeptide (Lys-Gly) (interchain with G-Cter in SUMO2)). A coiled-coil region spans residues 211 to 247 (QLIQMNEVHVAKIQQIERECEMAEEEHRIKMEVLNKK). Serine 274 carries the phosphoserine modification.

This sequence belongs to the MSANTD3 family. Expressed in brain.

The sequence is that of Myb/SANT-like DNA-binding domain-containing protein 3 (MSANTD3) from Homo sapiens (Human).